The chain runs to 135 residues: uncharacterized protein (135 aa).

The tract at residues 100–125 (KESPATSSEDISSCSDCDSERLQSDD) is disordered. The span at 106-115 (SSEDISSCSD) shows a compositional bias: low complexity.

This is an uncharacterized protein from Microplitis demolitor (Parasitoid wasp).